A 433-amino-acid chain; its full sequence is Histidine--tRNA ligase (433 aa).

This sequence belongs to the class-II aminoacyl-tRNA synthetase family. In terms of assembly, homodimer.

It is found in the cytoplasm. The catalysed reaction is tRNA(His) + L-histidine + ATP = L-histidyl-tRNA(His) + AMP + diphosphate + H(+). The protein is Histidine--tRNA ligase of Crocosphaera subtropica (strain ATCC 51142 / BH68) (Cyanothece sp. (strain ATCC 51142)).